The sequence spans 151 residues: Pseudo histidine-containing phosphotransfer protein 2 (151 aa).

The 96-residue stretch at 38–133 folds into the HPt domain; it reads SPNFVEEVAA…ATLKQKLESY (96 aa).

Functionally, functions as a two-component phosphorelay mediator between cytokinin sensor histidine kinases and response regulators (B-type ARRs). Plays an important role in propagating cytokinin signal transduction. The chain is Pseudo histidine-containing phosphotransfer protein 2 from Oryza sativa subsp. japonica (Rice).